A 100-amino-acid polypeptide reads, in one-letter code: Urease subunit gamma (100 aa).

This sequence belongs to the urease gamma subunit family. In terms of assembly, heterotrimer of UreA (gamma), UreB (beta) and UreC (alpha) subunits. Three heterotrimers associate to form the active enzyme.

Its subcellular location is the cytoplasm. It carries out the reaction urea + 2 H2O + H(+) = hydrogencarbonate + 2 NH4(+). It participates in nitrogen metabolism; urea degradation; CO(2) and NH(3) from urea (urease route): step 1/1. The polypeptide is Urease subunit gamma (Rhizobium etli (strain CIAT 652)).